The sequence spans 66 residues: Large ribosomal subunit protein uL29 (66 aa).

The protein belongs to the universal ribosomal protein uL29 family.

This chain is Large ribosomal subunit protein uL29, found in Francisella tularensis subsp. tularensis (strain FSC 198).